The sequence spans 351 residues: Photosystem II D2 protein (351 aa).

Residues 39 to 59 (CAYLALGAWFTGTTFVSSWYT) form a helical membrane-spanning segment. His116 provides a ligand contact to chlorophyll a. A helical transmembrane segment spans residues 123–139 (GFCLRQFEIARLVGLRP). Pheophytin a is bound by residues Gln128 and Asn141. The helical transmembrane segment at 151–164 (VFVSVFLLYPLGQA) threads the bilayer. A chlorophyll a-binding site is contributed by His196. A helical transmembrane segment spans residues 206–226 (GALLCAIHGATVENTLFEDGE). A plastoquinone contacts are provided by His213 and Phe260. His213 contacts Fe cation. His267 serves as a coordination point for Fe cation. A helical membrane pass occupies residues 277-293 (GLWVSSIGIVGLALNLR).

It belongs to the reaction center PufL/M/PsbA/D family. PSII is composed of 1 copy each of membrane proteins PsbA, PsbB, PsbC, PsbD, PsbE, PsbF, PsbH, PsbI, PsbJ, PsbK, PsbL, PsbM, PsbT, PsbY, PsbZ, Psb30/Ycf12, at least 3 peripheral proteins of the oxygen-evolving complex and a large number of cofactors. It forms dimeric complexes. The cofactor is The D1/D2 heterodimer binds P680, chlorophylls that are the primary electron donor of PSII, and subsequent electron acceptors. It shares a non-heme iron and each subunit binds pheophytin, quinone, additional chlorophylls, carotenoids and lipids. There is also a Cl(-1) ion associated with D1 and D2, which is required for oxygen evolution. The PSII complex binds additional chlorophylls, carotenoids and specific lipids..

It localises to the plastid. It is found in the chloroplast thylakoid membrane. It carries out the reaction 2 a plastoquinone + 4 hnu + 2 H2O = 2 a plastoquinol + O2. Photosystem II (PSII) is a light-driven water:plastoquinone oxidoreductase that uses light energy to abstract electrons from H(2)O, generating O(2) and a proton gradient subsequently used for ATP formation. It consists of a core antenna complex that captures photons, and an electron transfer chain that converts photonic excitation into a charge separation. The D1/D2 (PsbA/PsbD) reaction center heterodimer binds P680, the primary electron donor of PSII as well as several subsequent electron acceptors. D2 is needed for assembly of a stable PSII complex. The protein is Photosystem II D2 protein of Cyanidium caldarium (Red alga).